The sequence spans 241 residues: Endo-chitosanase B (241 aa).

The signal sequence occupies residues 1–17; the sequence is MRLSEILAVALVTGATA. N-linked (GlcNAc...) asparagine glycosylation is present at Asn86.

This sequence belongs to the glycosyl hydrolase 75 family.

It is found in the secreted. The catalysed reaction is Endohydrolysis of beta-(1-&gt;4)-linkages between D-glucosamine residues in a partly acetylated chitosan.. In terms of biological role, chitosanase catalyzing the endo-type cleavage of chitosan, the deacylated form of chitin. Chitosanase may be crucial in the degradation of the deacetylated portion of chitin in the fungal cell wall. Chitoolisaccharides produced by the hydrolysis of partially N-acetylated chitosan are known to have many biological activities, including antibacterial activity, immune-enhancing effects, and elicitor activity. This is Endo-chitosanase B (csnB) from Aspergillus oryzae (strain ATCC 42149 / RIB 40) (Yellow koji mold).